Reading from the N-terminus, the 415-residue chain is Gamma-glutamyl phosphate reductase (415 aa).

This sequence belongs to the gamma-glutamyl phosphate reductase family.

The protein resides in the cytoplasm. It carries out the reaction L-glutamate 5-semialdehyde + phosphate + NADP(+) = L-glutamyl 5-phosphate + NADPH + H(+). It participates in amino-acid biosynthesis; L-proline biosynthesis; L-glutamate 5-semialdehyde from L-glutamate: step 2/2. Catalyzes the NADPH-dependent reduction of L-glutamate 5-phosphate into L-glutamate 5-semialdehyde and phosphate. The product spontaneously undergoes cyclization to form 1-pyrroline-5-carboxylate. The polypeptide is Gamma-glutamyl phosphate reductase (Shouchella clausii (strain KSM-K16) (Alkalihalobacillus clausii)).